Here is a 529-residue protein sequence, read N- to C-terminus: Bifunctional purine biosynthesis protein PurH (529 aa).

In terms of domain architecture, MGS-like spans 1–148 (MQQRRPVRRA…KNHKDVAIVV (148 aa)). Residue Lys287 is modified to N6-acetyllysine.

Belongs to the PurH family.

The catalysed reaction is (6R)-10-formyltetrahydrofolate + 5-amino-1-(5-phospho-beta-D-ribosyl)imidazole-4-carboxamide = 5-formamido-1-(5-phospho-D-ribosyl)imidazole-4-carboxamide + (6S)-5,6,7,8-tetrahydrofolate. The enzyme catalyses IMP + H2O = 5-formamido-1-(5-phospho-D-ribosyl)imidazole-4-carboxamide. It participates in purine metabolism; IMP biosynthesis via de novo pathway; 5-formamido-1-(5-phospho-D-ribosyl)imidazole-4-carboxamide from 5-amino-1-(5-phospho-D-ribosyl)imidazole-4-carboxamide (10-formyl THF route): step 1/1. Its pathway is purine metabolism; IMP biosynthesis via de novo pathway; IMP from 5-formamido-1-(5-phospho-D-ribosyl)imidazole-4-carboxamide: step 1/1. The polypeptide is Bifunctional purine biosynthesis protein PurH (Escherichia fergusonii (strain ATCC 35469 / DSM 13698 / CCUG 18766 / IAM 14443 / JCM 21226 / LMG 7866 / NBRC 102419 / NCTC 12128 / CDC 0568-73)).